A 190-amino-acid polypeptide reads, in one-letter code: Xanthine phosphoribosyltransferase 1 (190 aa).

Residues L20 and N27 each contribute to the xanthine site. Residue 128 to 132 (ANGEA) participates in 5-phospho-alpha-D-ribose 1-diphosphate binding. K156 lines the xanthine pocket.

Belongs to the purine/pyrimidine phosphoribosyltransferase family. Xpt subfamily. In terms of assembly, homodimer.

Its subcellular location is the cytoplasm. It catalyses the reaction XMP + diphosphate = xanthine + 5-phospho-alpha-D-ribose 1-diphosphate. It participates in purine metabolism; XMP biosynthesis via salvage pathway; XMP from xanthine: step 1/1. Its function is as follows. Converts the preformed base xanthine, a product of nucleic acid breakdown, to xanthosine 5'-monophosphate (XMP), so it can be reused for RNA or DNA synthesis. The chain is Xanthine phosphoribosyltransferase 1 from Clostridium botulinum (strain ATCC 19397 / Type A).